An 83-amino-acid chain; its full sequence is Protein ORF5 (83 aa).

The protein belongs to the microviridae C protein family.

In terms of biological role, plays a central role in the packaging of viral DNA into phage procapsid, which occurs in the late stage of infection. Can interact with the replicative complex after the completion of one round of DNA synthesis. When protein ORF5 is bound to the replicative form, the complex becomes accessible to procapsid and serves as a DNA packaging apparatus. This chain is Protein ORF5, found in Spiroplasma melliferum (SpV4).